A 303-amino-acid polypeptide reads, in one-letter code: Pseudouridine-5'-phosphate glycosidase (303 aa).

Glu-23 serves as the catalytic Proton donor. Residues Lys-85 and Val-105 each contribute to the substrate site. Position 137 (Asp-137) interacts with Mn(2+). 139–141 lines the substrate pocket; the sequence is SQD. Residue Lys-158 is the Nucleophile of the active site.

The protein belongs to the pseudouridine-5'-phosphate glycosidase family. In terms of assembly, homotrimer. Mn(2+) serves as cofactor.

It catalyses the reaction D-ribose 5-phosphate + uracil = psi-UMP + H2O. Its function is as follows. Catalyzes the reversible cleavage of pseudouridine 5'-phosphate (PsiMP) to ribose 5-phosphate and uracil. Functions biologically in the cleavage direction, as part of a pseudouridine degradation pathway. The chain is Pseudouridine-5'-phosphate glycosidase from Myxococcus xanthus (strain DK1622).